A 427-amino-acid polypeptide reads, in one-letter code: Tumor necrosis factor receptor superfamily member 16 (427 aa).

A signal peptide spans 1–28; the sequence is MGAGATGRAMDGPRLLLLLLLGVSLGGA. Over 29–250 the chain is Extracellular; that stretch reads KEACPTGLYT…PVVTRGTTDN (222 aa). TNFR-Cys repeat units lie at residues 31–64, 66–107, 108–146, and 148–188; these read ACPT…QTVC, PCLD…DAVC, RCAY…NTVC, and ECPD…DAEC. 12 disulfides stabilise this stretch: cysteine 32–cysteine 43, cysteine 44–cysteine 57, cysteine 47–cysteine 64, cysteine 67–cysteine 83, cysteine 86–cysteine 99, cysteine 89–cysteine 107, cysteine 109–cysteine 122, cysteine 125–cysteine 138, cysteine 128–cysteine 146, cysteine 149–cysteine 164, cysteine 167–cysteine 180, and cysteine 170–cysteine 188. A glycan (N-linked (GlcNAc...) asparagine) is linked at asparagine 60. A disordered region spans residues 194 to 219; it reads RWITRSTPPEGSDSTAPSTQEPEAPP. Polar residues predominate over residues 197–214; it reads TRSTPPEGSDSTAPSTQE. A helical membrane pass occupies residues 251–272; it reads LIPVYCSILAAVVVGLVAYIAF. Residues 273 to 427 lie on the Cytoplasmic side of the membrane; sequence KRWNSCKQNK…CSESTATSPV (155 aa). 2 stretches are compositionally biased toward polar residues: residues 281-291 and 305-326; these read NKQGANSRPVN and SGIS…TASG. Residues 281-338 form a disordered region; the sequence is NKQGANSRPVNQTPPPEGEKLHSDSGISVDSQSLHDQQPHTQTASGQALKGDGGLYSS. At serine 311 the chain carries Phosphoserine. Positions 326 to 341 are mediates interaction with KIDINS220; sequence GQALKGDGGLYSSLPP. The Death domain occupies 344–421; it reads REEVEKLLNG…DLVESLCSES (78 aa).

In terms of assembly, homodimer; disulfide-linked. Heterodimer with SORCS2. The extracellular domains of the heterodimer bind NGF. The cytoplasmic region of the heterodimer binds TRIO. NGF binding mediates dissociation of TRIO from the receptor complex. Interacts with RTN4R. Interacts with TRAF2, TRAF4, TRAF6, PTPN13 and RANBP9. Interacts through TRAF6 with SQSTM1 which bridges NGFR to NTRK1. Interacts with BEX1. Interacts with BEX3. Interacts with KIDINS220 and NTRK1. Can form a ternary complex with NTRK1 and KIDINS220 and this complex is affected by the expression levels of KIDINS220. An increase in KIDINS220 expression leads to a decreased association of NGFR and NTRK1. Interacts with NTRK2; may regulate the ligand specificity of the NTRK2 receptor. Interacts (via death domain) with RAB31. Interacts with LINGO1. Interacts with NRADD. Interacts with MAGED1; the interaction antagonizes the association NGFR:NTRK1. Interacts (via death domain) with ARHGDIA and RIPK2. Interacts with BFAR. N- and O-glycosylated. In terms of processing, O-linked glycans consist of Gal(1-3)GalNAc core elongated by 1 or 2 NeuNAc. Post-translationally, phosphorylated on serine residues.

Its subcellular location is the cell membrane. It is found in the cytoplasm. The protein resides in the perikaryon. It localises to the cell projection. The protein localises to the growth cone. Its subcellular location is the dendritic spine. Functionally, low affinity receptor which can bind to NGF, BDNF, NTF3, and NTF4. Forms a heterodimeric receptor with SORCS2 that binds the precursor forms of NGF, BDNF and NTF3 with high affinity, and has much lower affinity for mature NGF and BDNF. Plays an important role in differentiation and survival of specific neuronal populations during development. Can mediate cell survival as well as cell death of neural cells. Plays a role in the inactivation of RHOA. Plays a role in the regulation of the translocation of GLUT4 to the cell surface in adipocytes and skeletal muscle cells in response to insulin, probably by regulating RAB31 activity, and thereby contributes to the regulation of insulin-dependent glucose uptake. Necessary for the circadian oscillation of the clock genes BMAL1, PER1, PER2 and NR1D1 in the suprachiasmatic nucleus (SCmgetaN) of the brain and in liver and of the genes involved in glucose and lipid metabolism in the liver. Together with BFAR negatively regulates NF-kappa-B and JNK-related signaling pathways. The chain is Tumor necrosis factor receptor superfamily member 16 (NGFR) from Homo sapiens (Human).